A 485-amino-acid chain; its full sequence is Pumilio domain-containing protein 7 (485 aa).

The segment at 29–72 is disordered; sequence NKTHKNKNPKPPVKLLPYRHGSNTTSSDSDSYIFNSGSGSSDAE. The span at 49–71 shows a compositional bias: polar residues; it reads GSNTTSSDSDSYIFNSGSGSSDA. 8 Pumilio repeats span residues 86-124, 128-163, 164-200, 201-236, 237-279, 287-324, 326-361, and 370-411; these read DVLLNGQLIDFAIDPSGVKFLEANYPLDSEDQIRKAVFE, ESTTLFVGLCHSRNGNFIVQKLVELATPAEQRELLR, QMIDGGLLAMCKDKFACRVVQLALQKFDHSNVFQLIQ, ELSTFDLAAMCTDQISIHVIQRVVKQLPVDMWTFFV, HFLS…FRIQ, CIVRNCYRLSSNEFANYVIQYVIKSSGIMEMYRDTIID, CLLRNLLSMSQDKYASHVIEGAFLFAPPALLHEMME, and DVES…RELP. The tract at residues 439–454 is RNA-binding; the sequence is FSSGKKIIDSVMRHGV.

RNA-binding protein that binds to the consensus sequence 5'-CUCUGUAUCUUGU-3' in mRNA 3'-UTRs and modulates mRNA expression and stability. Functions redundantly with puf-5 and puf-6 in oocyte formation and organization, early embryonic cell divisions, and repression of expression of glp-1 and other maternal mRNAs in late oogenesis. This is Pumilio domain-containing protein 7 from Caenorhabditis elegans.